Consider the following 258-residue polypeptide: Hydroxyacylglutathione hydrolase (258 aa).

Zn(2+)-binding residues include histidine 52, histidine 54, aspartate 56, histidine 57, histidine 109, aspartate 126, and histidine 164.

The protein belongs to the metallo-beta-lactamase superfamily. Glyoxalase II family. As to quaternary structure, monomer. Requires Zn(2+) as cofactor.

The enzyme catalyses an S-(2-hydroxyacyl)glutathione + H2O = a 2-hydroxy carboxylate + glutathione + H(+). It participates in secondary metabolite metabolism; methylglyoxal degradation; (R)-lactate from methylglyoxal: step 2/2. In terms of biological role, thiolesterase that catalyzes the hydrolysis of S-D-lactoyl-glutathione to form glutathione and D-lactic acid. The protein is Hydroxyacylglutathione hydrolase of Xylella fastidiosa (strain 9a5c).